A 278-amino-acid chain; its full sequence is Undecaprenyl-diphosphatase (278 aa).

Transmembrane regions (helical) follow at residues 14–34 (GTTEFLPISSSAHLIVLPWLF), 40–60 (GLAFNVALHLGTLSAVLAYFW), 89–109 (WAVIIGSLPAGLAGFFLNDVI), 121–141 (TAIVFTSLLLIVLGFVLWLAE), 153–173 (LGLRDGLVVGLAQALALLPGV), 196–216 (FSFILGIPAIAGAGLLETLKL), 227–247 (VLFVTGVASAAITGFLAIAFL), and 257–277 (SIFIVYRIALGLVLLLVVSFA).

It belongs to the UppP family.

The protein resides in the cell membrane. The catalysed reaction is di-trans,octa-cis-undecaprenyl diphosphate + H2O = di-trans,octa-cis-undecaprenyl phosphate + phosphate + H(+). Functionally, catalyzes the dephosphorylation of undecaprenyl diphosphate (UPP). Confers resistance to bacitracin. The chain is Undecaprenyl-diphosphatase from Thermomicrobium roseum (strain ATCC 27502 / DSM 5159 / P-2).